The following is a 220-amino-acid chain: Cell division protein SepF (220 aa).

The tract at residues 1–120 (MAIKDAFNKM…RREQYQHAAH (120 aa)) is disordered. Residues 26–35 (LSSKKQEEPV) show a composition bias toward basic and acidic residues. The span at 39–79 (QQTSRPNQQQQAARASQPQQPKQARPQMQAQQRPQSQSRAA) shows a compositional bias: low complexity. The span at 93–102 (VSHDYNDRRA) shows a compositional bias: basic and acidic residues.

The protein belongs to the SepF family. As to quaternary structure, homodimer. Interacts with FtsZ.

The protein resides in the cytoplasm. Cell division protein that is part of the divisome complex and is recruited early to the Z-ring. Probably stimulates Z-ring formation, perhaps through the cross-linking of FtsZ protofilaments. Its function overlaps with FtsA. The protein is Cell division protein SepF of Streptococcus equi subsp. equi (strain 4047).